A 1928-amino-acid polypeptide reads, in one-letter code: MTGGQSCSSNMIVWIPDEKEVFVKGELMSTDINKNKFTGQEEQIGIVHPLDSTEVSNLVQVRISDVFPVNPSTFDKVENMSELTHLNEPSVLYNLEKRYDCDLIYTYSGLFLVAINPYHNLNLYSEDHINLYHNKHNRLSKSRLDENSHEKLPPHIFAIAEEAYENLLSEGKDQSILVTGESGAGKTENTKKILQYLASITSGSPSNIAPVSGSSIVESFEMKILQSNPILESFGNAQTVRNNNSSRFGKFIKIEFNEHGMINGAHIEWYLLEKSRIVHQNSKERNYHIFYQLLSGLDDSELKNLRLKSRNVKDYKILSNSNQDIIPGINDVENFKELLSALNIIGFSKDQIRWIFQVVAIILLIGNIEFVSDRAEQASFKNDVSAICSNLGVDEKDFQTAILRPRSKAGKEWVSQSKNSQQAKFILNALSRNLYERLFGYIVDMINKNLDHGSATLNYIGLLDIAGFEIFENNSFEQLCINYTNEKLQQFFNNHMFVLEQSEYLKENIQWDYIDYGKDLQLTIDLIESKGPPTGVLPLLDEEAVLPKSTDESFYSKLISTWDQNSSKFKRSRLKNGFILKHYAGDVEYTVEGWLSKNKDPLNDNLLSLLSSSQNDIISKLFQPEGEKSSSAGVEANISNQEVKKSARTSTFKTTSSRHREQQITLLNQLASTHPHFVRCIIPNNVKKVKTFNRRLILDQLRCNGVLEGIRLAREGYPNRIAFQEFFQRYRILYPENSTTTTFSSKLKASTKQNCEFLLTSLQLDTKVYKIGNTKLFFKAGVLADLEKQKDVKLNNIMIKLTATIRGYTVRKEITYHLQKLKKTRVIGNTFRLYNRLVKEDPWFNLFIRIKPLLTSSNDMTRTKKFNEQINKLKNDLQEMESKKKFLEEKNQKTVNELENTQDLLNQEKENLRKNESLLNRVKTSSETLQKQFDDLVSEKDEISREKLEVAQNLEEAHQKIQGLQETIREREATLEKLHSKNNELIKQISDLNCDISKEQSSQSLIKESKLKLENEIKRLKDVINSKEEEIKSFNDKLSSSEEDLDIKLVTLEKNCNIAMSRLQSLVTENSDLRSKNENFKKEKAALNNQLKNKESELLKMKEKIDNHKKELATFSKQRDDAVSEHGKITAELKETRIQLTEYKSNYQKIKEEYSNFQRETKEQEQKKRNSLVESLNDSKIKELEARLSQEISLNQYLNKRISGNSVETNISSTRRSTSYSDDPLDKEDIIKKYYDLQLAFTEITRNLENEIEEKKNLISRLRFTETRLASSSFEDQKIKAQMKKLKKLIQDMDPSIPLDSILNEPLDNCPDKESDINKLMLEVDYLKRQLDIETRAHYDAENAISALHSKFRKIQGESSLSSSDIYKLKFEASEERVKSLEDKLKTMPLRDRTNLPVGDIIKNRDSISKYEEEIRYYKLENYKLQEILNESNGKLSQLTLDLRQSKSKEALLSEQLDRLQKDLESTERQKELLSSTIKQQKQQFENCMDDLQGNELRLREHIHALKQAEEDVKNMASIIEKLKTQNKQKEKLIWEREMERNDSDMQLQETLLELKRVQDVKKILSDDLAHLKERLSAVEDRSQYTDEINRLKEELNCSLKAETNLKKEFATLKYKLETSTNDSEAKISDLLKQLDHYTKVVEMLNNEKDAISLAEKELYQKYEALNTECESLKGKIVSLTKIKQELESDLNQKTDALQISNAALSSSTQKNKEITEKIKYLEETLQLQMEQNSRNGELVKTLQASCNGYKDKFDDEKQKNIDLYEENQTLQKLNTDLQLQLKNLHERLSDTTEKNAWLSKIHELENMVSLETDLKYEEMKKNKSLERAVEELQTKNSQQTDVIELANKNRSEFEEATLKYEAQISDLEKYISQQELEMKKSIRDNSSYRDKVQEMAQEIEFWKSRYESTMIGSKNIDSNNAQSKIFS.

Residues 8-71 enclose the Myosin N-terminal SH3-like domain; sequence SSNMIVWIPD…RISDVFPVNP (64 aa). The Myosin motor domain occupies 75–791; it reads DKVENMSELT…VLADLEKQKD (717 aa). 180-187 is an ATP binding site; that stretch reads GESGAGKT. The actin-binding stretch occupies residues 460 to 529; the sequence is IGLLDIAGFE…LQLTIDLIES (70 aa). The segment covering 629–641 has biased composition (polar residues); that stretch reads SSSAGVEANISNQ. The tract at residues 629 to 657 is disordered; the sequence is SSSAGVEANISNQEVKKSARTSTFKTTSS. Residues 794 to 823 form the IQ domain; that stretch reads LNNIMIKLTATIRGYTVRKEITYHLQKLKK. Positions 856–1911 form a coiled coil; sequence SSNDMTRTKK…FWKSRYESTM (1056 aa).

It belongs to the TRAFAC class myosin-kinesin ATPase superfamily. Myosin family.

Functionally, required for cell division. The protein is Myosin-1 (MYO1) of Saccharomyces cerevisiae (strain ATCC 204508 / S288c) (Baker's yeast).